A 374-amino-acid chain; its full sequence is o-succinylbenzoate synthase (374 aa).

Lys-164 serves as the catalytic Proton donor. Residues Asp-189, Glu-214, and Asp-239 each contribute to the Mg(2+) site. The active-site Proton acceptor is Lys-263.

Belongs to the mandelate racemase/muconate lactonizing enzyme family. MenC type 2 subfamily. As to quaternary structure, homodimer. A divalent metal cation serves as cofactor.

The enzyme catalyses (1R,6R)-6-hydroxy-2-succinyl-cyclohexa-2,4-diene-1-carboxylate = 2-succinylbenzoate + H2O. Its pathway is quinol/quinone metabolism; 1,4-dihydroxy-2-naphthoate biosynthesis; 1,4-dihydroxy-2-naphthoate from chorismate: step 4/7. It functions in the pathway quinol/quinone metabolism; menaquinone biosynthesis. Functionally, converts 2-succinyl-6-hydroxy-2,4-cyclohexadiene-1-carboxylate (SHCHC) to 2-succinylbenzoate (OSB). Also acts as a N-succinylamino acid racemase (NSAR) that catalyzes the racemization of N-succinyl-L-phenylglycine. L.innocua has the menaquinone synthesis pathway, indicating that the species requires OSBS activity. However, the NSAR/OSBS is not encoded in the menaquinone operon, raising the possibility that both NSAR and OSBS are biological functions. The sequence is that of o-succinylbenzoate synthase from Listeria innocua serovar 6a (strain ATCC BAA-680 / CLIP 11262).